A 220-amino-acid polypeptide reads, in one-letter code: Deoxyribose-phosphate aldolase (220 aa).

The Proton donor/acceptor role is filled by Asp-89. The active-site Schiff-base intermediate with acetaldehyde is Lys-151. The Proton donor/acceptor role is filled by Lys-180.

It belongs to the DeoC/FbaB aldolase family. DeoC type 1 subfamily.

The protein localises to the cytoplasm. It catalyses the reaction 2-deoxy-D-ribose 5-phosphate = D-glyceraldehyde 3-phosphate + acetaldehyde. The protein operates within carbohydrate degradation; 2-deoxy-D-ribose 1-phosphate degradation; D-glyceraldehyde 3-phosphate and acetaldehyde from 2-deoxy-alpha-D-ribose 1-phosphate: step 2/2. Functionally, catalyzes a reversible aldol reaction between acetaldehyde and D-glyceraldehyde 3-phosphate to generate 2-deoxy-D-ribose 5-phosphate. The protein is Deoxyribose-phosphate aldolase of Thermus thermophilus (strain ATCC BAA-163 / DSM 7039 / HB27).